Reading from the N-terminus, the 217-residue chain is Putative thymidylate synthase (217 aa).

Residue Cys-139 is part of the active site.

The protein belongs to the thymidylate synthase family. Archaeal-type ThyA subfamily. In terms of assembly, monomer.

It is found in the cytoplasm. It functions in the pathway pyrimidine metabolism; dTTP biosynthesis. Functionally, may catalyze the biosynthesis of dTMP using an unknown cosubstrate. The polypeptide is Putative thymidylate synthase (Methanosarcina barkeri (strain Fusaro / DSM 804)).